A 156-amino-acid polypeptide reads, in one-letter code: Transcriptional regulator MraZ (156 aa).

2 SpoVT-AbrB domains span residues 7–64 (KERH…EPSV) and 93–136 (LEMV…EPAR).

Belongs to the MraZ family. In terms of assembly, forms oligomers.

It is found in the cytoplasm. The protein localises to the nucleoid. This Chlorobium phaeovibrioides (strain DSM 265 / 1930) (Prosthecochloris vibrioformis (strain DSM 265)) protein is Transcriptional regulator MraZ.